Here is a 372-residue protein sequence, read N- to C-terminus: NAD(P)H-quinone oxidoreductase subunit 1 (372 aa).

The next 9 helical transmembrane spans lie at 27 to 47 (AIWMPLPMILMLIGATVGVLV), 65 to 85 (PEYIGPLGLLAPVADGLKLVF), 97 to 117 (WLFTLGPILVVLPVFLSYLIV), 128 to 148 (IGTGIFLWIALSSIQPIGLLM), 166 to 186 (AAQSISYEIPLALSVLAIVMM), 204 to 224 (ILGWNIWRQPLGFLIFWIAAL), 266 to 286 (VLSALLVAVLYLGGWDFPIPI), 308 to 328 (ALGITMTLVKAYFLVFIAILL), and 347 to 367 (FLLPVGLVNLLLTAALKLAFP).

The protein belongs to the complex I subunit 1 family. In terms of assembly, NDH-1 is composed of at least 11 different subunits.

Its subcellular location is the cellular thylakoid membrane. The catalysed reaction is a plastoquinone + NADH + (n+1) H(+)(in) = a plastoquinol + NAD(+) + n H(+)(out). The enzyme catalyses a plastoquinone + NADPH + (n+1) H(+)(in) = a plastoquinol + NADP(+) + n H(+)(out). Its function is as follows. NDH-1 shuttles electrons from an unknown electron donor, via FMN and iron-sulfur (Fe-S) centers, to quinones in the respiratory and/or the photosynthetic chain. The immediate electron acceptor for the enzyme in this species is believed to be plastoquinone. Couples the redox reaction to proton translocation, and thus conserves the redox energy in a proton gradient. The sequence is that of NAD(P)H-quinone oxidoreductase subunit 1 from Trichormus variabilis (strain ATCC 29413 / PCC 7937) (Anabaena variabilis).